The following is a 561-amino-acid chain: Sperm-tail PG-rich repeat-containing protein 2 (561 aa).

STPGR repeat units follow at residues Val21 to Gln34, Pro63 to Gln72, and Gly97 to Asn104. The disordered stretch occupies residues Pro123 to Tyr143. STPGR repeat units lie at residues Gly164–Gly191, Gly200–Gln210, Pro250–Phe285, Thr292–Asn299, Leu334–Ser367, Leu421–Val438, and Gly471–Leu481.

The polypeptide is Sperm-tail PG-rich repeat-containing protein 2 (Stpg2) (Mus musculus (Mouse)).